The sequence spans 177 residues: Parathyroid hormone-related protein (177 aa).

A signal peptide spans 1 to 24 (MQRRLVQQWSVAVFLLSYAVPSCG). Residues 25–34 (RSVEGLSRRL) constitute a propeptide that is removed on maturation. An important for receptor binding region spans residues 57–68 (RFFLHHLIAEIH). Residues 74 to 177 (ATSEVSPNSK…TSLELDSRRH (104 aa)) are disordered. A compositionally biased stretch (polar residues) spans 76–90 (SEVSPNSKPSPNTKN). Residues 108–129 (TNKVETYKEQPLKTPGKKKKGK) carry the Nuclear localization signal motif. Over residues 109 to 118 (NKVETYKEQP) the composition is skewed to basic and acidic residues. Over residues 122–132 (PGKKKKGKPGK) the composition is skewed to basic residues.

Belongs to the parathyroid hormone family. In terms of assembly, interacts with PTH1R (via N-terminal extracellular domain). In terms of processing, there are 3 principal secretory forms, called PTHrP[1-36], PTHrP[38-94], and osteostatin (PTHrP[107-139]) arising from endoproteolytic cleavage of the initial translation product. Each of these secretory forms is believed to have one or more of its own receptors that mediates the normal paracrine, autocrine and endocrine actions. In terms of tissue distribution, ubiquitous. Also expressed in the mammary gland.

It localises to the secreted. It is found in the cytoplasm. The protein resides in the nucleus. In terms of biological role, neuroendocrine peptide which is a critical regulator of cellular and organ growth, development, migration, differentiation and survival and of epithelial calcium ion transport. Acts by binding to its receptor, PTH1R, activating G protein-coupled receptor signaling. Regulates endochondral bone development and epithelial-mesenchymal interactions during the formation of the mammary glands and teeth. Required for skeletal homeostasis. Promotes mammary mesenchyme differentiation and bud outgrowth by modulating mesenchymal cell responsiveness to BMPs. Up-regulates BMPR1A expression in the mammary mesenchyme and this increases the sensitivity of these cells to BMPs and allows them to respond to BMP4 in a paracrine and/or autocrine fashion. BMP4 signaling in the mesenchyme, in turn, triggers epithelial outgrowth and augments MSX2 expression, which causes the mammary mesenchyme to inhibit hair follicle formation within the nipple sheath. Promotes colon cancer cell migration and invasion in an integrin alpha-6/beta-1-dependent manner through activation of Rac1. Potent inhibitor of osteoclastic bone resorption. This Homo sapiens (Human) protein is Parathyroid hormone-related protein.